A 514-amino-acid polypeptide reads, in one-letter code: 2,3-bisphosphoglycerate-independent phosphoglycerate mutase (514 aa).

Residues aspartate 14 and serine 64 each coordinate Mn(2+). The active-site Phosphoserine intermediate is serine 64. Residues histidine 125, 155-156, arginine 187, arginine 193, 263-266, and lysine 336 contribute to the substrate site; these read RD and RADR. Mn(2+) is bound by residues aspartate 403, histidine 407, aspartate 444, histidine 445, and histidine 463.

It belongs to the BPG-independent phosphoglycerate mutase family. In terms of assembly, monomer. The cofactor is Mn(2+).

The enzyme catalyses (2R)-2-phosphoglycerate = (2R)-3-phosphoglycerate. It participates in carbohydrate degradation; glycolysis; pyruvate from D-glyceraldehyde 3-phosphate: step 3/5. Its function is as follows. Catalyzes the interconversion of 2-phosphoglycerate and 3-phosphoglycerate. The polypeptide is 2,3-bisphosphoglycerate-independent phosphoglycerate mutase (Salmonella choleraesuis (strain SC-B67)).